Here is a 103-residue protein sequence, read N- to C-terminus: Small ribosomal subunit protein uS10 (103 aa).

The protein belongs to the universal ribosomal protein uS10 family. Part of the 30S ribosomal subunit.

Its function is as follows. Involved in the binding of tRNA to the ribosomes. This Pelodictyon phaeoclathratiforme (strain DSM 5477 / BU-1) protein is Small ribosomal subunit protein uS10.